The chain runs to 206 residues: High frequency lysogenization protein HflD homolog (206 aa).

It belongs to the HflD family.

It localises to the cytoplasm. The protein localises to the cell inner membrane. In Idiomarina loihiensis (strain ATCC BAA-735 / DSM 15497 / L2-TR), this protein is High frequency lysogenization protein HflD homolog.